We begin with the raw amino-acid sequence, 435 residues long: FAD-dependent monooxygenase ATEG_07662 (435 aa).

A helical membrane pass occupies residues 8 to 28 (PLDVAIIGGGIIGIMTALGLL). Residues E38, A51, and R119 each contribute to the FAD site. Residue N191 is glycosylated (N-linked (GlcNAc...) asparagine). The active site involves R201. D317 and A330 together coordinate FAD.

This sequence belongs to the paxM FAD-dependent monooxygenase family. It depends on FAD as a cofactor.

The protein resides in the membrane. Its pathway is secondary metabolite biosynthesis. FAD-dependent monooxygenase; part of the cluster B that mediates the biosynthesis of azasperpyranones, members of the azaphilone family that exhibit anti-cancer activities. Azasperpyranones are synthesized by 2 clusters, A and B. Cluster A is responsible for the production of the polyhydric phenol moiety while the azaphilonoid scaffold is produced by the cluster B. The non-reducing polyketide synthase ATEG_03629 produces 5-methyl orsellinic acid, which is then reduced to 5-methyl orsellinic aldehyde by the NRPS-like protein ATEG_03630. 5-methyl orsellinic aldehyde is then first hydroxylated by the FAD-dependent monooxygenase ATEG_03635 and subsequently hydroxylated by the cytochrome P450 monooxygenase ATEG_03631 to produce the unstable polyhydric phenol precursor of azasperpyranones. On the other hand, the polyketide synthase ATEG_07659 is responsible for producing the 3,5-dimethyloctadienone moiety from acetyl-CoA, three malonyl-CoA, and two S-adenosyl methionines (SAM). The 3,5-dimethyloctadienone moiety is then loaded onto the SAT domain of ATEG_07661 and extended with four malonyl-CoA and one SAM, which leads to the formation of 2,4-dihydroxy-6-(5,7-dimethyl-2-oxo-trans-3-trans-5-nonadienyl)-3-methylbenzaldehyde (compound 8) after reductive release and aldol condensation. The FAD-dependent monooxygenase ATEG_07662 is the next enzyme in the biosynthesis sequence and hydroxylates the side chain at the benzylic position of compound 8. In Aspergillus nidulans, afoF, the ortholog of the FAD-dependent oxygenase ATEG_07660, is the key enzyme for the biosynthesis of asperfuranone by catalyzing the hydroxylation at C-8 of to prevent the formation of a six-membered ring hemiacetal intermediate and thus facilitating the formation of a five-membered ring to produce asperfuranone. In Aspergillus terreus, ATEG_07660 is probably not functional, which leads to the formation of the six-membered ring hemiacetal intermediate presperpyranone instead of asperfuranone. Finally, ATEG_03636 is involved in the condensation of the polyhydric phenol moiety produced by cluster A and the perasperpyranone precursor produced by cluster B, to yield azasperpyranone A. Further modifications of azasperpyranone A result in the production of derivatives, including azasperpyranone B to F. The sequence is that of FAD-dependent monooxygenase ATEG_07662 from Aspergillus terreus (strain NIH 2624 / FGSC A1156).